We begin with the raw amino-acid sequence, 414 residues long: MIOREX complex component 10 (414 aa).

The transit peptide at 1-29 (MLSFRSLTSTFGFVSRFQIRRLGTSLSIQ) directs the protein to the mitochondrion. Residues 30 to 373 (NLEVQDGRWK…ISLLNERNST (344 aa)) are Mitochondrial matrix-facing. The helical transmembrane segment at 374–394 (FLEWIIIYLIAFELCFEIYHF) threads the bilayer. Residues 395–414 (YQKYSSYCSEPTNDDLDATK) are Mitochondrial intermembrane-facing.

This sequence belongs to the RMD1/sif2 family. Associates with the mitochondrial ribosome.

Its subcellular location is the mitochondrion inner membrane. Functionally, component of MIOREX complexes, large expressome-like assemblies of ribosomes with factors involved in all the steps of post-transcriptional gene expression. The polypeptide is MIOREX complex component 10 (Saccharomyces cerevisiae (strain ATCC 204508 / S288c) (Baker's yeast)).